Consider the following 354-residue polypeptide: Serine/threonine-protein kinase ppk34 (354 aa).

One can recognise a Protein kinase domain in the interval 40-331; the sequence is YRLKNMLGYG…IEELLRDPFL (292 aa). ATP is bound by residues 46-54 and Lys69; that span reads LGYGACSTV. The active-site Proton acceptor is the Asp200.

The protein belongs to the protein kinase superfamily. Ser/Thr protein kinase family.

It is found in the cytoplasm. The protein localises to the nucleus. It carries out the reaction L-seryl-[protein] + ATP = O-phospho-L-seryl-[protein] + ADP + H(+). It catalyses the reaction L-threonyl-[protein] + ATP = O-phospho-L-threonyl-[protein] + ADP + H(+). This Schizosaccharomyces pombe (strain 972 / ATCC 24843) (Fission yeast) protein is Serine/threonine-protein kinase ppk34 (ppk34).